Here is a 272-residue protein sequence, read N- to C-terminus: uncharacterized protein (272 aa).

4 helical membrane passes run 9 to 29 (PVGF…GSGV), 38 to 58 (LTSF…SFPP), 154 to 174 (AGEF…VLML), and 188 to 208 (AIAL…FNPI). The Cytoplasmic portion of the chain corresponds to 209-272 (AAKLEEKTES…KTKKGSVHEA (64 aa)).

It belongs to the MotA family.

It is found in the cell membrane. May be involved in some transport function. This is an uncharacterized protein from Bacillus subtilis (strain 168).